Reading from the N-terminus, the 226-residue chain is Charged multivesicular body protein 4 (226 aa).

Residues 22-88 are a coiled coil; sequence IQKLRETENM…DGTLSTIEMQ (67 aa). Residues 169–226 are disordered; that stretch reads QENFDKEIIGIPEPTPTLPEAPTEDLPEKAKEKKKATTTTAVEDDDDPDMKQLLSWSN.

This sequence belongs to the SNF7 family. In terms of assembly, homopolymer; forms elongated striated filaments of uniform ~10nm width. Monomers interact in a staggered arrangement mediated by complementary charged electrostatic surfaces. Interacts with l(2)gd1 (via DM14 domains 1 and 3); the interaction is direct and blocks access to the surface involved in homopolymerization. This interaction may be required for the ESCRT-III complex role in multivesicular body formation. Expressed at considerably higher levels in testis than in ovary. Expressed in midgut, eye, mouthparts and male accessory gland.

Its subcellular location is the endosome. It localises to the multivesicular body. The protein localises to the midbody. Its activity is regulated as follows. May be regulated by aurB/Aurora kinase B-dependent phosphorylation. Its function is as follows. Probable core polymerisation component of the endosomal sorting required for transport (ESCRT) III complex involved in multiple cellular processes requiring the outward bending of membranes, including vesicle budding, membrane repair and cytokinesis. The ESCRT pathway involves 4 complexes (ESCRT-0, -I, -II and -III) that sequentially assemble on the cytoplasmic side of membranes and induce membrane remodeling, budding and scission. As part of the ESCRT-III complex, involved in the budding of intraluminal vesicles (ILVs) into endosomes to form multivesicular bodies (MVBs), which target their contents for degradation via the endolysosomal pathway. Involved in regulation of signal transduction pathways, including the Notch and BMP/decapentaplegic (dpp) pathways, by sequestering the intracellular domains of activated receptors into ILVs, isolating them from the cytoplasm and targeting them for lysosomal degradation. Involved in targeting ubiquitilated proteins, such as mono-ubiquitilanated N/Notch, to MVBs for degradation. Plays a role in wing development by regulating Notch signaling. Involved in abscission of germline cells during oogenesis. Involved in spermiogenesis. Required for efficient cytoplasmic isolation and abscission during cytokinesis of epithelial sensory organ precursor cells. May be involved in septate junction remodeling and maintenance. The chain is Charged multivesicular body protein 4 from Drosophila melanogaster (Fruit fly).